The chain runs to 284 residues: 2-dehydro-3-deoxyphosphooctonate aldolase (284 aa).

This sequence belongs to the KdsA family.

The protein localises to the cytoplasm. It carries out the reaction D-arabinose 5-phosphate + phosphoenolpyruvate + H2O = 3-deoxy-alpha-D-manno-2-octulosonate-8-phosphate + phosphate. Its pathway is carbohydrate biosynthesis; 3-deoxy-D-manno-octulosonate biosynthesis; 3-deoxy-D-manno-octulosonate from D-ribulose 5-phosphate: step 2/3. It functions in the pathway bacterial outer membrane biogenesis; lipopolysaccharide biosynthesis. The sequence is that of 2-dehydro-3-deoxyphosphooctonate aldolase from Salmonella enteritidis PT4 (strain P125109).